A 352-amino-acid chain; its full sequence is uncharacterized protein (352 aa).

Positions 285–352 form a coiled coil; sequence FQHLRNARER…IKSEIRRLQR (68 aa).

This is an uncharacterized protein from Emericella nidulans (strain FGSC A4 / ATCC 38163 / CBS 112.46 / NRRL 194 / M139) (Aspergillus nidulans).